Here is a 497-residue protein sequence, read N- to C-terminus: uncharacterized protein (497 aa).

3 residues coordinate Ca(2+): D12, T13, and C52. Residue C52 is the Nucleophile of the active site. At C52 the chain carries 3-oxoalanine (Cys). The active site involves H102. 2 residues coordinate Ca(2+): D284 and H285.

This sequence belongs to the sulfatase family. Ca(2+) serves as cofactor. In terms of processing, the conversion to 3-oxoalanine (also known as C-formylglycine, FGly), of a serine or cysteine residue in prokaryotes and of a cysteine residue in eukaryotes, is critical for catalytic activity.

This is an uncharacterized protein from Escherichia coli (strain K12).